The chain runs to 94 residues: ATP synthase subunit c (94 aa).

Helical transmembrane passes span 15 to 35 and 61 to 81; these read VSVG…WGLI and GGLM…FIFA.

It belongs to the ATPase C chain family. In terms of assembly, F-type ATPases have 2 components, F(1) - the catalytic core - and F(0) - the membrane proton channel. F(1) has five subunits: alpha(3), beta(3), gamma(1), delta(1), epsilon(1). F(0) has three main subunits: a(1), b(2) and c(10-14). The alpha and beta chains form an alternating ring which encloses part of the gamma chain. F(1) is attached to F(0) by a central stalk formed by the gamma and epsilon chains, while a peripheral stalk is formed by the delta and b chains.

It localises to the cell inner membrane. Its function is as follows. F(1)F(0) ATP synthase produces ATP from ADP in the presence of a proton or sodium gradient. F-type ATPases consist of two structural domains, F(1) containing the extramembraneous catalytic core and F(0) containing the membrane proton channel, linked together by a central stalk and a peripheral stalk. During catalysis, ATP synthesis in the catalytic domain of F(1) is coupled via a rotary mechanism of the central stalk subunits to proton translocation. In terms of biological role, key component of the F(0) channel; it plays a direct role in translocation across the membrane. A homomeric c-ring of between 10-14 subunits forms the central stalk rotor element with the F(1) delta and epsilon subunits. The protein is ATP synthase subunit c of Nitrosococcus oceani (strain ATCC 19707 / BCRC 17464 / JCM 30415 / NCIMB 11848 / C-107).